Here is a 157-residue protein sequence, read N- to C-terminus: UPF0251 protein CLJ_B1488 (157 aa).

Belongs to the UPF0251 family.

This is UPF0251 protein CLJ_B1488 from Clostridium botulinum (strain 657 / Type Ba4).